The following is a 406-amino-acid chain: Peptidase T (406 aa).

His-82 contributes to the Zn(2+) binding site. Asp-84 is a catalytic residue. Asp-142 contacts Zn(2+). Glu-176 acts as the Proton acceptor in catalysis. Residues Glu-177, Asp-199, and His-381 each coordinate Zn(2+).

It belongs to the peptidase M20B family. Requires Zn(2+) as cofactor.

Its subcellular location is the cytoplasm. It catalyses the reaction Release of the N-terminal residue from a tripeptide.. Cleaves the N-terminal amino acid of tripeptides. The polypeptide is Peptidase T (Streptococcus agalactiae serotype V (strain ATCC BAA-611 / 2603 V/R)).